Consider the following 517-residue polypeptide: MFS efflux transporter inpD (517 aa).

The disordered stretch occupies residues 1 to 24 (MEKTQTPSLTPDELSARSSTPFEE). 5 helical membrane-spanning segments follow: residues 37–57 (LKFS…ALSL), 59–79 (DIGW…LVFG), 89–109 (IVYL…ATAP), 112–132 (IALI…LSGA), and 151–171 (ILGA…GGII). Asn172 carries an N-linked (GlcNAc...) asparagine glycan. 9 consecutive transmembrane segments (helical) span residues 178 to 198 (WIFY…VFLL), 219 to 239 (LPAF…LLWG), 247 to 267 (NARI…FMLV), 292 to 312 (FFSF…PIWL), 328 to 348 (LPII…TPVI), 352 to 372 (VPFM…LSTL), 381 to 401 (VLGF…QTLV), 412 to 432 (IPIG…IALS), and 485 to 505 (AIVK…IGVL).

Belongs to the major facilitator superfamily.

It is found in the cell membrane. MFS efflux transporter; part of the inp gene cluster that mediates the biosynthesis of fellutamide B, a mycotoxin that acts as a proteasome inhibitor. In the first step of fellutabmide B biosynthesis inpC activates 3-hydroxydodecanoic acid to generate 3-hydroxydodecanoyl-AMP that is then loaded onto the T0 domain of inpB. The 3-hydroxydodecanoyl-S-phosphopantetheinyl-T0 is sequentially extended with L-Asn and L-Gln by the two CAT modules of inpB. The linear lipodipeptide from inpB is then transferred onto inpA for the addition of the third amino acid, L-Leu. Reductive releasing of the lipotripeptide by the TE domain of inpA produces (2S)-fellutamide B. InpF might be involved in the release and transfer of the lipodipeptide from inpB to inpA. The inp cluster-encoded proteasome subunit inpE confers resistance to internally produced fellutamides. The MFS efflux transporter inpD may contribute to fellutamide resistance as well. This is MFS efflux transporter inpD from Emericella nidulans (strain FGSC A4 / ATCC 38163 / CBS 112.46 / NRRL 194 / M139) (Aspergillus nidulans).